We begin with the raw amino-acid sequence, 84 residues long: Small ribosomal subunit protein bS20 (84 aa).

Belongs to the bacterial ribosomal protein bS20 family.

In terms of biological role, binds directly to 16S ribosomal RNA. The polypeptide is Small ribosomal subunit protein bS20 (Lacticaseibacillus casei (strain BL23) (Lactobacillus casei)).